Reading from the N-terminus, the 486-residue chain is ATP synthase subunit beta (486 aa).

164–171 (GGAGVGKT) is a binding site for ATP.

It belongs to the ATPase alpha/beta chains family. As to quaternary structure, F-type ATPases have 2 components, CF(1) - the catalytic core - and CF(0) - the membrane proton channel. CF(1) has five subunits: alpha(3), beta(3), gamma(1), delta(1), epsilon(1). CF(0) has four main subunits: a(1), b(1), b'(1) and c(9-12).

Its subcellular location is the cellular thylakoid membrane. The enzyme catalyses ATP + H2O + 4 H(+)(in) = ADP + phosphate + 5 H(+)(out). Its function is as follows. Produces ATP from ADP in the presence of a proton gradient across the membrane. The catalytic sites are hosted primarily by the beta subunits. This is ATP synthase subunit beta from Prochlorococcus marinus (strain MIT 9312).